We begin with the raw amino-acid sequence, 123 residues long: Large ribosomal subunit protein uL29 (123 aa).

It belongs to the universal ribosomal protein uL29 family. As to quaternary structure, component of the large ribosomal subunit.

It is found in the cytoplasm. In terms of biological role, component of the large ribosomal subunit. The ribosome is a large ribonucleoprotein complex responsible for the synthesis of proteins in the cell. Plays an essential role in early embryonic development. May act as a haploinsufficient tumor suppressor. The chain is Large ribosomal subunit protein uL29 (rpl35) from Danio rerio (Zebrafish).